The sequence spans 150 residues: Nucleoside diphosphate kinase (150 aa).

Lys9, Phe57, Arg85, Thr91, Arg102, and Asn112 together coordinate ATP. The Pros-phosphohistidine intermediate role is filled by His115.

Belongs to the NDK family. In terms of assembly, homotetramer. It depends on Mg(2+) as a cofactor.

It localises to the cytoplasm. The catalysed reaction is a 2'-deoxyribonucleoside 5'-diphosphate + ATP = a 2'-deoxyribonucleoside 5'-triphosphate + ADP. The enzyme catalyses a ribonucleoside 5'-diphosphate + ATP = a ribonucleoside 5'-triphosphate + ADP. Its function is as follows. Major role in the synthesis of nucleoside triphosphates other than ATP. The ATP gamma phosphate is transferred to the NDP beta phosphate via a ping-pong mechanism, using a phosphorylated active-site intermediate. The chain is Nucleoside diphosphate kinase from Symbiobacterium thermophilum (strain DSM 24528 / JCM 14929 / IAM 14863 / T).